The sequence spans 354 residues: Uroporphyrinogen decarboxylase (354 aa).

Substrate-binding positions include 27 to 31, aspartate 77, tyrosine 154, threonine 209, and histidine 327; that span reads RQAGR.

It belongs to the uroporphyrinogen decarboxylase family. As to quaternary structure, homodimer.

The protein localises to the cytoplasm. The catalysed reaction is uroporphyrinogen III + 4 H(+) = coproporphyrinogen III + 4 CO2. The protein operates within porphyrin-containing compound metabolism; protoporphyrin-IX biosynthesis; coproporphyrinogen-III from 5-aminolevulinate: step 4/4. In terms of biological role, catalyzes the decarboxylation of four acetate groups of uroporphyrinogen-III to yield coproporphyrinogen-III. This Escherichia coli O17:K52:H18 (strain UMN026 / ExPEC) protein is Uroporphyrinogen decarboxylase.